The sequence spans 362 residues: N-acylethanolamine-hydrolyzing acid amidase (362 aa).

The N-terminal stretch at 1–33 (MGTLATRAACHGAHLALALLLLLSLSGPWLSAV) is a signal peptide. 2 N-linked (GlcNAc...) asparagine glycosylation sites follow: Asn42 and Asn112. Cys131 functions as the Nucleophile in the catalytic mechanism. 2 N-linked (GlcNAc...) asparagine glycosylation sites follow: Asn314 and Asn338.

It belongs to the acid ceramidase family. Heterodimer of an alpha and a beta subunit, produced by autocatalytic cleavage. N-glycosylated. Tunicamycin treatment causes a reduction in specific activity against N-palmitoylethanolamine. Post-translationally, autoproteolytic cleavage at pH 4.5 gives rise to the alpha and beta subunit. Cleavage gives rise to a conformation change that activates the enzyme. The same catalytic Cys residue mediates the autoproteolytic cleavage and subsequent hydrolysis of lipid substrates.

The protein localises to the lysosome. It localises to the membrane. The enzyme catalyses N-hexadecanoylethanolamine + H2O = ethanolamine + hexadecanoate. The catalysed reaction is an N-(long-chain fatty acyl)ethanolamine + H2O = a long-chain fatty acid + ethanolamine. It carries out the reaction N-dodecanoylethanolamine + H2O = dodecanoate + ethanolamine. It catalyses the reaction N-tetradecanoylethanolamine + H2O = tetradecanoate + ethanolamine. The enzyme catalyses an N-acylsphing-4-enine + H2O = sphing-4-enine + a fatty acid. The catalysed reaction is N-hexadecanoylsphing-4-enine + H2O = sphing-4-enine + hexadecanoate. It carries out the reaction N-dodecanoylsphing-4-enine + H2O = dodecanoate + sphing-4-enine. The protein operates within lipid metabolism; fatty acid metabolism. Its function is as follows. Degrades bioactive fatty acid amides to their corresponding acids, with the following preference: N-palmitoylethanolamine &gt; N-myristoylethanolamine &gt; N-stearoylethanolamine &gt; N-oleoylethanolamine &gt; N-linoleoylethanolamine &gt; N-arachidonoylethanolamine. This Mus musculus (Mouse) protein is N-acylethanolamine-hydrolyzing acid amidase.